We begin with the raw amino-acid sequence, 456 residues long: Sulfoacetaldehyde dehydrogenase (456 aa).

An NAD(+)-binding site is contributed by 213–218 (GGTAAA). Residues Glu233 and Cys267 contribute to the active site.

Belongs to the aldehyde dehydrogenase family. In terms of assembly, homotetramer.

The catalysed reaction is sulfoacetaldehyde + NAD(+) + H2O = sulfoacetate + NADH + 2 H(+). Functionally, mediates conversion of 2-sulfoacetaldehyde into sulfoacetate. The enzyme is specific for NAD; NADP is not a substrate. Part of a pathway that can utilize the amino group of taurine as a sole source of nitrogen for growth. The protein is Sulfoacetaldehyde dehydrogenase (safD) of Neptuniibacter caesariensis.